We begin with the raw amino-acid sequence, 100 residues long: Integration host factor subunit alpha (100 aa).

The protein belongs to the bacterial histone-like protein family. Heterodimer of an alpha and a beta chain.

This protein is one of the two subunits of integration host factor, a specific DNA-binding protein that functions in genetic recombination as well as in transcriptional and translational control. The sequence is that of Integration host factor subunit alpha (ihfA) from Zymomonas mobilis subsp. mobilis (strain ATCC 31821 / ZM4 / CP4).